The chain runs to 540 residues: Glucose-6-phosphate isomerase (540 aa).

The Proton donor role is filled by Glu-350. Active-site residues include His-381 and Lys-503.

Belongs to the GPI family.

Its subcellular location is the cytoplasm. The catalysed reaction is alpha-D-glucose 6-phosphate = beta-D-fructose 6-phosphate. It participates in carbohydrate biosynthesis; gluconeogenesis. The protein operates within carbohydrate degradation; glycolysis; D-glyceraldehyde 3-phosphate and glycerone phosphate from D-glucose: step 2/4. Catalyzes the reversible isomerization of glucose-6-phosphate to fructose-6-phosphate. In Paraburkholderia phymatum (strain DSM 17167 / CIP 108236 / LMG 21445 / STM815) (Burkholderia phymatum), this protein is Glucose-6-phosphate isomerase.